The sequence spans 144 residues: Aklanonic acid methyl ester cyclase AcmA (144 aa).

Substrate is bound by residues Asn-51 and Gln-105.

Belongs to the polyketide cyclase DnrD family. In terms of assembly, homotetramer.

The enzyme catalyses methyl aklanonate = aklaviketone. It functions in the pathway antibiotic biosynthesis; daunorubicin biosynthesis. Its pathway is antibiotic biosynthesis; carminomycin biosynthesis. It participates in antibiotic biosynthesis; rhodomycin biosynthesis. The protein operates within antibiotic biosynthesis; aclacinomycin biosynthesis. Its function is as follows. Involved in the biosynthesis of aklavinone which is an important precursor common to the formation of the clinically significant anthracyclines such as carminomycin, daunorubicin (daunomycin), rhodomycin, aclacinomycin T (aklavin) and aclacinomycin A (aclarubicin). These compounds are aromatic polyketide antibiotics that exhibit high cytotoxicity and are widely applied in the chemotherapy of a variety of cancers. Catalyzes the cyclization of aklanonic acid methyl ester to yield aklaviketone. It is also able to use nogalonic acid methyl ester as substrate, but produces exclusively auraviketone with C9-R stereochemistry. The sequence is that of Aklanonic acid methyl ester cyclase AcmA (acma) from Streptomyces galilaeus.